The primary structure comprises 491 residues: Ketol-acid reductoisomerase (NADP(+)) (491 aa).

A KARI N-terminal Rossmann domain is found at 15 to 208 (AQLGKCRFMG…GGHRAGVLES (194 aa)). NADP(+) is bound by residues 45–48 (CGAQ), arginine 68, arginine 76, serine 78, and 108–110 (DKQ). Histidine 132 is an active-site residue. NADP(+) is bound at residue glycine 158. 2 KARI C-terminal knotted domains span residues 209–344 (SFVA…TAPQ) and 345–484 (YEGK…MTDM). Positions 217, 221, 389, and 393 each coordinate Mg(2+). Serine 414 is a substrate binding site.

The protein belongs to the ketol-acid reductoisomerase family. It depends on Mg(2+) as a cofactor.

The catalysed reaction is (2R)-2,3-dihydroxy-3-methylbutanoate + NADP(+) = (2S)-2-acetolactate + NADPH + H(+). It carries out the reaction (2R,3R)-2,3-dihydroxy-3-methylpentanoate + NADP(+) = (S)-2-ethyl-2-hydroxy-3-oxobutanoate + NADPH + H(+). Its pathway is amino-acid biosynthesis; L-isoleucine biosynthesis; L-isoleucine from 2-oxobutanoate: step 2/4. It functions in the pathway amino-acid biosynthesis; L-valine biosynthesis; L-valine from pyruvate: step 2/4. In terms of biological role, involved in the biosynthesis of branched-chain amino acids (BCAA). Catalyzes an alkyl-migration followed by a ketol-acid reduction of (S)-2-acetolactate (S2AL) to yield (R)-2,3-dihydroxy-isovalerate. In the isomerase reaction, S2AL is rearranged via a Mg-dependent methyl migration to produce 3-hydroxy-3-methyl-2-ketobutyrate (HMKB). In the reductase reaction, this 2-ketoacid undergoes a metal-dependent reduction by NADPH to yield (R)-2,3-dihydroxy-isovalerate. The protein is Ketol-acid reductoisomerase (NADP(+)) of Salmonella arizonae (strain ATCC BAA-731 / CDC346-86 / RSK2980).